Reading from the N-terminus, the 673-residue chain is Auxin response factor 9 (673 aa).

Residues 126–228 (FCKTLTASDT…ELRVGVRRLM (103 aa)) constitute a DNA-binding region (TF-B3). Disordered stretches follow at residues 356 to 386 (ELEP…PSVV) and 514 to 545 (DSDQ…QSRQ). The segment covering 516-545 (DQISQPSNGNKSDAPGTSSERSPLESQSRQ) has biased composition (polar residues). A PB1 domain is found at 547–639 (RSCTKVIMQG…EEAKLLAPKS (93 aa)).

This sequence belongs to the ARF family. As to quaternary structure, homodimers and heterodimers. Expressed in roots, culms, leaves and young panicles.

The protein resides in the nucleus. Auxin response factors (ARFs) are transcriptional factors that bind specifically to the DNA sequence 5'-TGTCTC-3' found in the auxin-responsive promoter elements (AuxREs). In Oryza sativa subsp. japonica (Rice), this protein is Auxin response factor 9 (ARF9).